The primary structure comprises 88 residues: Acylphosphatase (88 aa).

The 86-residue stretch at 3 to 88 folds into the Acylphosphatase-like domain; the sequence is AVDVLISGRV…RAGHQGFEVR (86 aa). Active-site residues include R18 and N36.

It belongs to the acylphosphatase family.

It carries out the reaction an acyl phosphate + H2O = a carboxylate + phosphate + H(+). In Methanocella arvoryzae (strain DSM 22066 / NBRC 105507 / MRE50), this protein is Acylphosphatase (acyP).